Consider the following 670-residue polypeptide: Transcription factor 4 (670 aa).

Residues 1–83 (MHHQQRMAAL…GTPYDHMTSR (83 aa)) are essential for MYOD1 inhibition. Disordered regions lie at residues 24–244 (AMFS…LGNS), 262–320 (LSYP…SQTG), 335–378 (HTNN…EGPL), 406–426 (PSTA…PSHN), 465–573 (SLLP…MANN), and 637–670 (KRRE…MGQM). Positions 29-49 (PVSSGKNGPTSLASGHFTGSN) are enriched in polar residues. Ser66, Ser87, and Ser92 each carry phosphoserine. Polar residues-rich tracts occupy residues 107–125 (GSYS…QQSL), 136–154 (GTLS…SSNN), 205–215 (PAASTFPSSFF), and 265–305 (PSHS…TDSI). Residues 336-347 (TNNSFSSNPSTP) are compositionally biased toward low complexity. Polar residues predominate over residues 364–373 (NGGQASSSPN). Phosphoserine is present on Ser371. Positions 378–399 (LHSLQSRIEDRLERLDDAIHVL) are leucine-zipper. 2 stretches are compositionally biased toward low complexity: residues 466–479 (LLPN…LPVQ) and 502–511 (GQSVSSGSSE). Ser514 is subject to Phosphoserine. Basic and acidic residues-rich tracts occupy residues 526-542 (KSSE…DIKS) and 558-573 (PEQK…MANN). Positions 567 to 620 (ERRMANNARERLRVRDINEAFKELGRMVQLHLKSDKPQTKLLILHQAVAVILSL) constitute a bHLH domain. The class A specific domain stretch occupies residues 622–645 (QQVRERNLNPKAACLKRREEEKVS).

Efficient DNA binding requires dimerization with another bHLH protein. Isoform 2 seems to form inactive heterodimers with MYOD1. Interacts with HIVEP2. Interacts with NEUROD2. Interacts with AGBL1. Interacts with BHLHA9. In terms of tissue distribution, expressed in the cerebral cortex, Purkinje and granule cell layers of the cerebellum, olfactory neuroepithelium, pyramidal cells of hippocampal layers CA1-CA4, and in the granular cells of the dentate gyrus.

The protein resides in the nucleus. Transcription factor that binds to the immunoglobulin enhancer Mu-E5/KE5-motif. Involved in the initiation of neuronal differentiation. Activates transcription by binding to the E box (5'-CANNTG-3'). Isoform 2 inhibits MYOD1 activation of the cardiac alpha-actin promoter. Binds to the E-box present in the somatostatin receptor 2 initiator element (SSTR2-INR) to activate transcription. May have a regulatory function in developmental processes as well as during neuronal plasticity. This is Transcription factor 4 (Tcf4) from Mus musculus (Mouse).